Reading from the N-terminus, the 405-residue chain is Cytochrome P450 107B1 (405 aa).

C352 provides a ligand contact to heme.

Belongs to the cytochrome P450 family. Heme is required as a cofactor.

The protein localises to the cytoplasm. Not known, probably involved in the catabolism of octane and guaiacol. It displays a weak activity in the O-dealkylation of 7-ethoxycoumarin. The sequence is that of Cytochrome P450 107B1 (cyp107B1) from Saccharopolyspora erythraea (strain ATCC 11635 / DSM 40517 / JCM 4748 / NBRC 13426 / NCIMB 8594 / NRRL 2338).